We begin with the raw amino-acid sequence, 519 residues long: Circadian clock oscillator protein KaiC (519 aa).

2 consecutive KaiC domains span residues 1 to 246 (MSEK…VNIF) and 260 to 519 (VRVS…GSDS). ATP is bound by residues glycine 48, threonine 49, glycine 50, lysine 51, threonine 52, leucine 53, lysine 223, leucine 224, arginine 225, threonine 227, histidine 229, threonine 239, threonine 289, glycine 290, threonine 291, glycine 292, lysine 293, threonine 294, and leucine 295. Position 52 (threonine 52) interacts with Mg(2+). Threonine 294 is a Mg(2+) binding site. Glutamate 317 provides a ligand contact to Mg(2+). An ATP-binding site is contributed by tryptophan 330. Phosphoserine; by autocatalysis is present on serine 430. Residue threonine 431 is modified to Phosphothreonine; by autocatalysis. Residues arginine 450, lysine 456, methionine 457, arginine 458, serine 460, histidine 462, and lysine 464 each contribute to the ATP site.

It belongs to the KaiC family. As to quaternary structure, homohexamer; hexamerization is dependent on ATP-binding. The KaiABC complex composition changes during the circadian cycle to control KaiC phosphorylation. Complexes KaiC(6), KaiA(2-4):KaiC(6), KaiB(6):KaiC(6) and KaiC(6):KaiB(6):KaiA(12) are among the most important forms, many form cooperatively. KaiC interacts with SasA, activating its autokinase function and leading to RpaA activation. It depends on Mg(2+) as a cofactor. Post-translationally, phosphorylated on serine and threonine residues by autocatalysis. Has a 4 step phosphorylation cycle; the autokinase acts first on Thr-431, then Ser-430. When Ser-430 is modified KaiC switches to an autophosphatase mode, acting first on phospho-Thr-431 then phospho-Ser-430.

The catalysed reaction is L-seryl-[protein] + ATP = O-phospho-L-seryl-[protein] + ADP + H(+). It catalyses the reaction L-threonyl-[protein] + ATP = O-phospho-L-threonyl-[protein] + ADP + H(+). The enzyme catalyses ATP + H2O = ADP + phosphate + H(+). With respect to regulation, the interaction with KaiA enhances its phosphorylation status, while the interaction with KaiB decreases it. Functionally, central component of the KaiABC oscillator complex, which constitutes the main circadian regulator in cyanobacteria. Complex composition changes during the circadian cycle to control KaiC phosphorylation. KaiA stimulates KaiC autophosphorylation, while KaiB sequesters KaiA, leading to KaiC autodephosphorylation. Clock output pathways impact the RpaA transcriptional regulator. KaiC enhances the autophosphorylation activity of SasA, which then transfers its phosphate group to RpaA to activate it. KaiB and KaiC together enhance the phospho-RpaA dephosphatase activity of CikA. In terms of biological role, has a weak, temperature-independent ATPase activity; ATPase activity defines the circadian period. The phosphorylation state of KaiC modulates its ATPase activity and effects KaiB binding. This Nostoc sp. (strain PCC 7120 / SAG 25.82 / UTEX 2576) protein is Circadian clock oscillator protein KaiC.